The primary structure comprises 123 residues: Phosphoribosyl-AMP cyclohydrolase (123 aa).

Aspartate 81 is a binding site for Mg(2+). Position 82 (cysteine 82) interacts with Zn(2+). The Mg(2+) site is built by aspartate 83 and aspartate 85. Cysteine 98 and cysteine 105 together coordinate Zn(2+).

It belongs to the PRA-CH family. As to quaternary structure, homodimer. Mg(2+) serves as cofactor. It depends on Zn(2+) as a cofactor.

It localises to the cytoplasm. It catalyses the reaction 1-(5-phospho-beta-D-ribosyl)-5'-AMP + H2O = 1-(5-phospho-beta-D-ribosyl)-5-[(5-phospho-beta-D-ribosylamino)methylideneamino]imidazole-4-carboxamide. It participates in amino-acid biosynthesis; L-histidine biosynthesis; L-histidine from 5-phospho-alpha-D-ribose 1-diphosphate: step 3/9. Functionally, catalyzes the hydrolysis of the adenine ring of phosphoribosyl-AMP. The protein is Phosphoribosyl-AMP cyclohydrolase of Nocardioides sp. (strain ATCC BAA-499 / JS614).